The primary structure comprises 366 residues: Transcription initiation factor IIA subunit 1 (366 aa).

Disordered stretches follow at residues 56 to 82, 133 to 162, and 257 to 317; these read LSPD…AANA, EVNS…SSGQ, and QLDG…DSAE. The span at 146 to 162 shows a compositional bias: low complexity; the sequence is SAASMMQKQQQAASSGQ. Over residues 264–317 the composition is skewed to acidic residues; it reads SSDEDESEESDDNIDNDDDDDLDKDDDEDAEHEDAAEEEPLNSEDDVTDEDSAE. Residues Ser265 and Ser306 each carry the phosphoserine; by TAF1 modification.

This sequence belongs to the TFIIA subunit 1 family. In terms of assembly, belongs to the TFIID complex which is composed of TATA binding protein (Tbp) and a number of TBP-associated factors (Tafs). TFIIA is a heterodimer of a unprocessed large subunit 1 and a small subunit gamma. It was originally believed to be a heterotrimer of an alpha (p30), a beta (p20) and a gamma subunit (p14). Interacts with Tbp. Taf4 interacts with TFIIA-L when TFIIA-L is in complex with Tbp. In terms of processing, the precursor form (48 kDa) is cleaved to give rise to the alpha (30 kDa) and beta (20 kDa) subunits.

The protein resides in the nucleus. TFIIA is a component of the transcription machinery of RNA polymerase II and plays an important role in transcriptional activation. TFIIA in a complex with TBP mediates transcriptional activity. In Drosophila melanogaster (Fruit fly), this protein is Transcription initiation factor IIA subunit 1 (TfIIA-L).